The sequence spans 221 residues: Transcription factor HES-4 (221 aa).

Positions 1–22 (MAADTPGKPSASPMAGAPASAS) are enriched in low complexity. The disordered stretch occupies residues 1 to 49 (MAADTPGKPSASPMAGAPASASRTPDKPRSAAEHRKSSKPVMEKRRRAR). Residues 24–35 (TPDKPRSAAEHR) are compositionally biased toward basic and acidic residues. The 58-residue stretch at 34-91 (HRKSSKPVMEKRRRARINESLAQLKTLILDALRKESSRHSKLEKADILEMTVRHLRSL) folds into the bHLH domain. One can recognise an Orange domain in the interval 110–143 (YRAGFHECLAEVNRFLAGCEGVPADVRSRLLGHL). Positions 201 to 221 (LPAAPRAGPQGPGGPWRPWLR) are disordered. The short motif at 216–219 (WRPW) is the WRPW motif element.

As to quaternary structure, transcription repression requires formation of a complex with a corepressor protein of the Groucho/TLE family.

The protein resides in the nucleus. Its function is as follows. Transcriptional repressor. Binds DNA on N-box motifs: 5'-CACNAG-3'. The protein is Transcription factor HES-4 (HES4) of Homo sapiens (Human).